Reading from the N-terminus, the 802-residue chain is MAPINGSRNGKHSKPQRGGNLKRKRVQEDLNSLIKKVEDLDVKETIEQFTDLPLSEPTASGLASSHYKTLTDIQSRAISHALKGRDILGAAKTGSGKTLAFLIPILENLYRKQWSEHDGLGALVLSPTRELAIQIFEVLRKVGRYHTFSAGLVIGGKSLREEQERLGRMNILVCTPGRMLQHLDQTSFFETHNLQMLVLDEADRILDMGFQKTVDAIIGHLPKERQTLLFSATQTKKVSDLARLSLQDPEYVAVHEAASSATPSKLQQHYVVTPLPQKLDVLWSFIRSNLKSKTIVFLSSGKQVRFVYESFRHMQPGVPLMHLHGRQKQGGRLDITTKFSSAQHAVLFATDVAARGLDFPAVDWVIQLDCPEDADTYIHRVGRTARYERDGRAVLFLDPSEEKGMLKRLEQKKVQVERINVKANKQQSIKDQLQNMCFKDPELKYLGQKAFISYAKSVYVQKDKEIFNIKELKLDEFAGSLGLPGAPRIKFIKGDDTKERKNAPRATAYLSSDDESDEEGEKKKTKKDETQVRTKYDRMFERRNQDVLADHYHKLINDDGTMVETNKATEDADEDDDFLSVKRRYEAGDKDLDVGGSSSEDEEDADGTEKKGAKVVHLDGKEALVIDSKRREKLLKSKKKLLKFKGKGTKLIYDDEGNAHELYEMEDEEQFKAKGDAKEQQAKFLAEEAERTRQADLEDKEVAKQKKREKKEKRKARERELLAMEEEGGDLVQIPYKEGGLASDEDEEVLRPSKKARVSFADEASEEEPKPKKAKKSQPAGKAPEQIETLEDLESLAAGLLG.

A disordered region spans residues 1-24 (MAPINGSRNGKHSKPQRGGNLKRK). The span at 9 to 24 (NGKHSKPQRGGNLKRK) shows a compositional bias: basic residues. The Q motif motif lies at 47-75 (EQFTDLPLSEPTASGLASSHYKTLTDIQS). The Helicase ATP-binding domain occupies 78–252 (ISHALKGRDI…RLSLQDPEYV (175 aa)). 91 to 98 (AKTGSGKT) contacts ATP. Positions 200-203 (DEAD) match the DEAD box motif. One can recognise a Helicase C-terminal domain in the interval 274–437 (PLPQKLDVLW…SIKDQLQNMC (164 aa)). Disordered stretches follow at residues 494 to 538 (GDDT…KYDR), 589 to 614 (DKDL…KGAK), and 685 to 802 (LAEE…GLLG). Over residues 520-538 (GEKKKTKKDETQVRTKYDR) the composition is skewed to basic and acidic residues. A compositionally biased stretch (basic and acidic residues) spans 685–704 (LAEEAERTRQADLEDKEVAK). A compositionally biased stretch (basic residues) spans 705–714 (QKKREKKEKR).

The protein belongs to the DEAD box helicase family. DDX10/DBP4 subfamily. As to quaternary structure, interacts with the U3 and U14 snoRNAs. Associates with pre-ribosomal complexes.

Its subcellular location is the nucleus. It is found in the nucleolus. It catalyses the reaction ATP + H2O = ADP + phosphate + H(+). ATP-dependent RNA helicase required for ribosome biogenesis. Involved in the release of U14 snoRNA in pre-ribosomal complexes. Required for pre-rRNA cleavage at site A2. The chain is ATP-dependent RNA helicase dbp4 (dbp4) from Aspergillus niger (strain ATCC MYA-4892 / CBS 513.88 / FGSC A1513).